The sequence spans 640 residues: Cytochrome P450 monooxygenase cyp1 (640 aa).

The N-linked (GlcNAc...) asparagine glycan is linked to Asn71. A helical transmembrane segment spans residues 120-139; the sequence is LLVFLVGLFLGTIYLLYRYW. Asn350 carries N-linked (GlcNAc...) asparagine glycosylation. Heme is bound at residue Cys572.

The protein belongs to the cytochrome P450 family. The cofactor is heme.

It localises to the membrane. It functions in the pathway secondary metabolite biosynthesis. Its function is as follows. Cytochrome P450 monooxygenase; part of the gene cluster that mediates the biosynthesis of the glycolipid biosurfactant ustilagic acid (UA). UA is a secreted cellobiose glycolipid that is toxic for many microorganisms and confers biocontrol activity to U.maydis. UA consists of 15,16-dihydroxypalmitic or 2,15,16-trihydroxypalmitic acid, which is O-glycosidically linked to cellobiose at its terminal hydroxyl group. In addition, the cellobiose moiety is acetylated and acylated with a short-chain hydroxy fatty acid. UA biosynthesis starts with omega-hydroxylation of palmitic acid catalyzed by the cytochrome P450 monooxygenase cyp1. Terminal hydroxylation of palmitic acid precedes subterminal hydroxylation catalyzed by the cytochrome P450 monooxygenase cyp2. Sequential glucosylation of the hydroxy fatty acid is probably catalyzed by the glycosyltransferase ugt1. The cellobiose lipid is further decorated by acetylation of the proximal glucose residue and by acylation with a short-chain beta-hydroxy fatty acid at the distal glucose residue. The acyltransferase uat1 may be a good candidate for catalyzing either acetylation or acylation of the cellobiose lipid. The fatty acid synthase fas2 may be involved in synthesis of the carbon backbone of the short-chain beta-hydroxy fatty acid esterified to the cellobiose disaccharide. The secreted UA consists of a mixture of both alpha-hydroxylated and non-hydroxylated glycolipids; therefore, alpha-hydroxylation of the long-chain fatty, catalyzed by the fatty acid hydroxylase ahd1, occurs late in UA biosynthesis and may be the last step before secretion. The chain is Cytochrome P450 monooxygenase cyp1 from Mycosarcoma maydis (Corn smut fungus).